The following is a 365-amino-acid chain: Protein mab-21-like (365 aa).

Belongs to the mab-21 family.

This Aedes aegypti (Yellowfever mosquito) protein is Protein mab-21-like.